The following is a 1093-amino-acid chain: Fused isobutyryl-CoA mutase (1093 aa).

Positions 1–20 (MTDLSDVSRTAAAKPPAVPG) are disordered. The B12-binding domain occupies 26 to 156 (KVRFVTAASL…AGMITDMAQR (131 aa)). His39 is an adenosylcob(III)alamin binding site. The GTPase chaperone MeaI stretch occupies residues 169 to 417 (LDTVVAGDRR…YQGLVGALGA (249 aa)). 219 to 224 (GAGKSS) provides a ligand contact to GTP. Residues Ser223, Ile248, Asp249, and Asp262 each contribute to the Mg(2+) site. Arg265 is a binding site for GTP. Positions 310 and 311 each coordinate Mg(2+). 357–360 (NKFD) contacts GTP. The segment at 418–579 (RGMSLKPGTL…MRENVPGSFP (162 aa)) is linker. Residues Phe587, Arg622, Arg728, Tyr772, Ser821, Arg856, and Lys861 each contribute to the substrate site. GTP is bound by residues Glu973 and Asn1092.

Belongs to the IcmF family. Homodimer. The cofactor is adenosylcob(III)alamin. Mg(2+) serves as cofactor.

The catalysed reaction is 2-methylpropanoyl-CoA = butanoyl-CoA. It carries out the reaction 3-methylbutanoyl-CoA = 2,2-dimethylpropanoyl-CoA. The enzyme catalyses GTP + H2O = GDP + phosphate + H(+). With respect to regulation, is prone to inactivation during catalytic turnover due to the occasional loss of the 5'-deoxyadenosine moiety and formation of the inactive cob(II)alamin cofactor in its active site. The GTPase activity of IcmF powers the ejection of the inactive cofactor and requires the presence of an acceptor protein, adenosyltransferase (ATR), for receiving it. ATR, in turn, catalyzes an adenosylation reaction converting cob(II)alamin in the presence of ATP and a reductant to the active AdoCbl cofactor. The repaired cofactor is then reloaded onto IcmF in a GTPase-gated step, regenerating active enzyme. The GTPase activity of IcmF is significantly decreased in the presence of excess of AdoCbl or cob(II)alamin and is higher in the apoenzyme state, indicating that the G-domain senses the presence and identity of the cofactor in the mutase active site. Functionally, catalyzes the reversible interconversion of isobutyryl-CoA and n-butyryl-CoA, and to a much lesser extent, of pivalyl-CoA and isovaleryl-CoA, using radical chemistry. Also exhibits GTPase activity, associated with its G-protein domain (MeaI) that functions as a chaperone that assists cofactor delivery and proper holo-enzyme assembly. The G-domain of IcmF also has a role in its cofactor repair. Does not display ATPase activity. The protein is Fused isobutyryl-CoA mutase of Cupriavidus metallidurans (strain ATCC 43123 / DSM 2839 / NBRC 102507 / CH34) (Ralstonia metallidurans).